Reading from the N-terminus, the 354-residue chain is Probable L-ascorbate-6-phosphate lactonase UlaG (354 aa).

This sequence belongs to the UlaG family. The cofactor is a divalent metal cation.

It is found in the cytoplasm. The catalysed reaction is L-ascorbate 6-phosphate + H2O = 3-dehydro-L-gulonate 6-phosphate. It participates in cofactor degradation; L-ascorbate degradation; D-xylulose 5-phosphate from L-ascorbate: step 1/4. Its function is as follows. Probably catalyzes the hydrolysis of L-ascorbate-6-P into 3-keto-L-gulonate-6-P. Is essential for L-ascorbate utilization under anaerobic conditions. The sequence is that of Probable L-ascorbate-6-phosphate lactonase UlaG from Escherichia coli O45:K1 (strain S88 / ExPEC).